A 422-amino-acid chain; its full sequence is uncharacterized protein (422 aa).

A signal peptide spans 1-23; that stretch reads MLSLIPFTVCAFLALITSKGGSA.

In terms of tissue distribution, component of the acid-insoluble organic matrix of the aragonitic skeleton (at protein level).

The protein resides in the secreted. This is an uncharacterized protein from Acropora millepora (Staghorn coral).